Reading from the N-terminus, the 89-residue chain is Small ribosomal subunit protein uS14 (89 aa).

The protein belongs to the universal ribosomal protein uS14 family. Part of the 30S ribosomal subunit. Contacts proteins S3 and S10.

Binds 16S rRNA, required for the assembly of 30S particles and may also be responsible for determining the conformation of the 16S rRNA at the A site. This chain is Small ribosomal subunit protein uS14, found in Acholeplasma laidlawii (strain PG-8A).